A 340-amino-acid chain; its full sequence is uncharacterized protein (340 aa).

This is an uncharacterized protein from Methanocaldococcus jannaschii (strain ATCC 43067 / DSM 2661 / JAL-1 / JCM 10045 / NBRC 100440) (Methanococcus jannaschii).